Consider the following 274-residue polypeptide: Diaminopimelate epimerase (274 aa).

3 residues coordinate substrate: Asn-11, Gln-44, and Asn-64. The Proton donor role is filled by Cys-73. Residues 74–75 (GN), Asn-157, Asn-190, and 208–209 (ER) contribute to the substrate site. The Proton acceptor role is filled by Cys-217. 218–219 (GT) serves as a coordination point for substrate.

The protein belongs to the diaminopimelate epimerase family. Homodimer.

It localises to the cytoplasm. The enzyme catalyses (2S,6S)-2,6-diaminopimelate = meso-2,6-diaminopimelate. Its pathway is amino-acid biosynthesis; L-lysine biosynthesis via DAP pathway; DL-2,6-diaminopimelate from LL-2,6-diaminopimelate: step 1/1. Its function is as follows. Catalyzes the stereoinversion of LL-2,6-diaminopimelate (L,L-DAP) to meso-diaminopimelate (meso-DAP), a precursor of L-lysine and an essential component of the bacterial peptidoglycan. The chain is Diaminopimelate epimerase from Blochmanniella pennsylvanica (strain BPEN).